We begin with the raw amino-acid sequence, 262 residues long: uncharacterized protein (262 aa).

The first 22 residues, 1–22 (MMNNSITLLLALLVGLVGFAFT), serve as a signal peptide directing secretion.

The protein belongs to the IIV-6 117L family.

This is an uncharacterized protein from Aedes vexans (Inland floodwater mosquito).